A 283-amino-acid chain; its full sequence is DegV domain-containing protein lmo2514 (283 aa).

One can recognise a DegV domain in the interval 5-282; sequence IAVVTDSTTY…EGALGLTWSI (278 aa). Hexadecanoate-binding residues include S63 and S96.

In terms of biological role, may bind long-chain fatty acids, such as palmitate, and may play a role in lipid transport or fatty acid metabolism. In Listeria monocytogenes serovar 1/2a (strain ATCC BAA-679 / EGD-e), this protein is DegV domain-containing protein lmo2514.